Consider the following 225-residue polypeptide: MKVFVVLAAIVAIANGLTSGSGVTTRYWDCCKPSCSWGGKASVTKPVRTCKANGNTTIDSNTQSGCNGGSSYVCNDQQPFTQGNVGYGFAAASISGQPESQTCCACYEMTFTNTAISGQKMIVQVTNTGSDLNGNHFDLMIPGGGVGIFNGCQSQWGAPSNGWGQRYGGISSQSECNQLPTSLRAGCNWRFGWFKNADNPSMKFTQVRCPTILTQKSQCVRTPGP.

A signal peptide spans 1-15 (MKVFVVLAAIVAIAN). The active-site Nucleophile is the Asp29. 7 cysteine pairs are disulfide-bonded: Cys30-Cys152, Cys31-Cys66, Cys35-Cys103, Cys50-Cys74, Cys104-Cys219, Cys106-Cys209, and Cys176-Cys187. Residue Asn55 is glycosylated (N-linked (GlcNAc...) asparagine). The Proton donor role is filled by Asp138.

It belongs to the glycosyl hydrolase 45 (cellulase K) family. In terms of processing, N- and O-glycosylated. Contains hybrid- and complex-type N-glycans.

It is found in the secreted. The catalysed reaction is Endohydrolysis of (1-&gt;4)-beta-D-glucosidic linkages in cellulose, lichenin and cereal beta-D-glucans.. Its activity is regulated as follows. Activity is not affected by metal ions except Mn(2+), which reduces the activity by 40-50%. However, no significant change in activity in response to 1 mM EDTA. In terms of biological role, hydrolyzes carboxymethylcellulose (CMC). Also hydrolyzes lichenan and barley beta-1,4-D-glucan. CMC is hydrolyzed majorily to cellobiose (G2), cellotriose (G3) and cellotetraose (G4). Cellohexaose (G6) is hydrolyzed to G4 and G2 with traces of G3. Cellopentaose (G5) is completely hydrolyzed to G2 and G3, and G4 is partially hydrolyzed to G2. Does not hydrolyze G2 or G3. Does not hydrolyze crystalline cellulose, soluble starch, xylan, mannan or laminarin. The polypeptide is Endoglucanase (Cryptopygus antarcticus (Antarctic springtail)).